Here is a 107-residue protein sequence, read N- to C-terminus: Probable monothiol glutaredoxin 2 (107 aa).

The 101-residue stretch at 7–107 (FKFIENEIKN…LEKMLKAYTR (101 aa)) folds into the Glutaredoxin domain. Residue Lys24 coordinates glutathione. A [2Fe-2S] cluster-binding site is contributed by Cys32. Residues Arg61, Phe73, and 86–87 (CD) contribute to the glutathione site.

This sequence belongs to the glutaredoxin family. Monothiol subfamily.

The sequence is that of Probable monothiol glutaredoxin 2 (grxC2) from Rickettsia conorii (strain ATCC VR-613 / Malish 7).